We begin with the raw amino-acid sequence, 315 residues long: Transcription antitermination protein NusB (315 aa).

Positions serine 296–aspartate 315 are disordered. A compositionally biased stretch (basic and acidic residues) spans lysine 302–aspartate 315.

The protein belongs to the NusB family.

Its function is as follows. Involved in transcription antitermination. Required for transcription of ribosomal RNA (rRNA) genes. Binds specifically to the boxA antiterminator sequence of the ribosomal RNA (rrn) operons. This Psychrobacter cryohalolentis (strain ATCC BAA-1226 / DSM 17306 / VKM B-2378 / K5) protein is Transcription antitermination protein NusB.